We begin with the raw amino-acid sequence, 1162 residues long: Integrin alpha-L (1162 aa).

Residues 1 to 23 form the signal peptide; sequence MSFRIAGPRLLLLGLQLFAKAWS. The Extracellular segment spans residues 24-1088; sequence YNLDTRPTQS…DLIHEKEMLH (1065 aa). FG-GAP repeat units lie at residues 28–79 and 80–138; these read TRPT…FCQP and VSLH…GPML. Cys70 and Cys77 are disulfide-bonded. Asn86 is a glycosylation site (N-linked (GlcNAc...) asparagine). Disulfide bonds link Cys108–Cys126 and Cys147–Cys199. A VWFA domain is found at 153–325; the sequence is DLVFLFDGSQ…EKLKDLFTDL (173 aa). Asn185 and Asn270 each carry an N-linked (GlcNAc...) asparagine glycan. FG-GAP repeat units follow at residues 336-387, 390-443, 444-504, 505-561, and 565-625; these read NRQD…GATF, QEPL…GGRW, NQTQ…LFEM, VSEL…GLSP, and QRIQ…FSPE. N-linked (GlcNAc...) asparagine glycosylation is present at Asn444. 11 residues coordinate Ca(2+): Asp466, Asp468, Asp470, Glu474, Asp528, Asn530, Asp532, Asp536, Asp588, Asp592, and Asp596. Cys651 and Cys705 form a disulfide bridge. N-linked (GlcNAc...) asparagine glycosylation is found at Asn668, Asn696, Asn724, and Asn728. Cys768 and Cys774 are joined by a disulfide. The N-linked (GlcNAc...) asparagine glycan is linked to Asn777. Cysteines 841 and 857 form a disulfide. N-linked (GlcNAc...) asparagine glycosylation is found at Asn858, Asn881, Asn891, Asn900, and Asn928. 2 disulfide bridges follow: Cys994-Cys1010 and Cys1018-Cys1049. A glycan (N-linked (GlcNAc...) asparagine) is linked at Asn1057. Residues 1089–1109 form a helical membrane-spanning segment; the sequence is VYVLSGIGGLVLLFLIFLALY. The Cytoplasmic portion of the chain corresponds to 1110–1162; sequence KVGFFKRNLKEKMEADGGVPNGSPPEDTDPLAVPGEETKDMGCLEPLRESDKD. The GFFKR motif motif lies at 1112-1116; sequence GFFKR. The interval 1124–1162 is disordered; that stretch reads ADGGVPNGSPPEDTDPLAVPGEETKDMGCLEPLRESDKD. Positions 1145–1162 are enriched in basic and acidic residues; the sequence is EETKDMGCLEPLRESDKD.

The protein belongs to the integrin alpha chain family. Heterodimer of an alpha and a beta subunit. The ITGAL alpha subunit associates with the ITGB2 beta subunit. Interacts with THBD. Interacts with CD226. Post-translationally, in resting T-cells, up to 40% of surface ITGAL is constitutively phosphorylated. Phosphorylation causes conformational changes needed for ligand binding and is necessary for the activation by some physiological agents. As to expression, leukocytes.

It is found in the cell membrane. Functionally, integrin ITGAL/ITGB2 is a receptor for ICAM1, ICAM2, ICAM3 and ICAM4. Integrin ITGAL/ITGB2 is a receptor for F11R. Integrin ITGAL/ITGB2 is a receptor for the secreted form of ubiquitin-like protein ISG15; the interaction is mediated by ITGAL. Involved in a variety of immune phenomena including leukocyte-endothelial cell interaction, cytotoxic T-cell mediated killing, and antibody dependent killing by granulocytes and monocytes. Contributes to natural killer cell cytotoxicity. Involved in leukocyte adhesion and transmigration of leukocytes including T-cells and neutrophils. Acts as a platform at the immunological synapse to translate TCR engagement and density of the ITGAL ligand ICAM1 into graded adhesion. Required for generation of common lymphoid progenitor cells in bone marrow, indicating the role in lymphopoiesis. Integrin ITGAL/ITGB2 in association with ICAM3, contributes to apoptotic neutrophil phagocytosis by macrophages. The polypeptide is Integrin alpha-L (Mus musculus (Mouse)).